A 345-amino-acid chain; its full sequence is Transcription factor 19 (345 aa).

The FHA domain occupies 31 to 88 (YRLGHRADLCDVALRPQQEPGLISGIHAELHAEPRGDDWRVSLEDHSLQGTLVNNVRL). Disordered regions lie at residues 138–167 (RSRGETRAGAGFRPMLPSQGAPQRPLSTLS) and 190–277 (LTFS…KYPV). The segment at 293–342 (AAPCCCLPQEETVAWVQCDGCDVWFHVACVGCSIQAAREADFRCPGCRAG) adopts a PHD-type zinc-finger fold. Positions 296, 298, 310, 313, 318, 321, 336, and 339 each coordinate Zn(2+).

The protein localises to the nucleus. Functionally, potential transcription factor that may play a role in the regulation of genes involved in cell cycle G1/S transition. May bind to regulatory elements of genes, including the promoter of the transcription factor FOXO1. The polypeptide is Transcription factor 19 (TCF19) (Macaca mulatta (Rhesus macaque)).